The following is a 290-amino-acid chain: Small ribosomal subunit protein uS2 (290 aa).

The span at 263 to 282 (ATAGATWEAEAGGDWAAESA) shows a compositional bias: low complexity. Positions 263 to 290 (ATAGATWEAEAGGDWAAESAQPNPETKW) are disordered.

This sequence belongs to the universal ribosomal protein uS2 family. In terms of assembly, component of the small ribosomal subunit. Mature ribosomes consist of a small (40S) and a large (60S) subunit. The 40S subunit contains about 33 different proteins and 1 molecule of RNA (18S). The 60S subunit contains about 49 different proteins and 3 molecules of RNA (25S, 5.8S and 5S). Interacts with rps21.

The protein resides in the cytoplasm. Functionally, required for the assembly and/or stability of the 40S ribosomal subunit. Required for the processing of the 20S rRNA-precursor to mature 18S rRNA in a late step of the maturation of 40S ribosomal subunits. The polypeptide is Small ribosomal subunit protein uS2 (rps0) (Talaromyces stipitatus (strain ATCC 10500 / CBS 375.48 / QM 6759 / NRRL 1006) (Penicillium stipitatum)).